A 306-amino-acid polypeptide reads, in one-letter code: Small ribosomal subunit biogenesis GTPase RsgA (306 aa).

One can recognise a CP-type G domain in the interval Lys-77–Leu-236. Residues Ser-126 to Asp-129 and Gly-179 to Thr-187 each bind GTP. Positions 260, 266, 268, and 274 each coordinate Zn(2+).

It belongs to the TRAFAC class YlqF/YawG GTPase family. RsgA subfamily. Monomer. Associates with 30S ribosomal subunit, binds 16S rRNA. The cofactor is Zn(2+).

It localises to the cytoplasm. One of several proteins that assist in the late maturation steps of the functional core of the 30S ribosomal subunit. Helps release RbfA from mature subunits. May play a role in the assembly of ribosomal proteins into the subunit. Circularly permuted GTPase that catalyzes slow GTP hydrolysis, GTPase activity is stimulated by the 30S ribosomal subunit. This is Small ribosomal subunit biogenesis GTPase RsgA from Onion yellows phytoplasma (strain OY-M).